Consider the following 261-residue polypeptide: Hemin import ATP-binding protein HmuV (261 aa).

Residues 2 to 243 (LCANNVSAQI…ALLKRVYNIN (242 aa)) enclose the ABC transporter domain. 34 to 41 (GPNGAGKS) contributes to the ATP binding site.

It belongs to the ABC transporter superfamily. Heme (hemin) importer (TC 3.A.1.14.5) family. In terms of assembly, the complex is composed of two ATP-binding proteins (HmuV), two transmembrane proteins (HmuU) and a solute-binding protein (HmuT).

Its subcellular location is the cell inner membrane. In terms of biological role, part of the ABC transporter complex HmuTUV involved in hemin import. Responsible for energy coupling to the transport system. The sequence is that of Hemin import ATP-binding protein HmuV from Pseudoalteromonas translucida (strain TAC 125).